A 269-amino-acid chain; its full sequence is Formamidopyrimidine-DNA glycosylase (269 aa).

Residue Pro-2 is the Schiff-base intermediate with DNA of the active site. Residue Glu-3 is the Proton donor of the active site. Catalysis depends on Lys-57, which acts as the Proton donor; for beta-elimination activity. Positions 90, 109, and 150 each coordinate DNA. The FPG-type zinc-finger motif lies at 235 to 269; that stretch reads LVYGKAGEPCPECGEPLQELKIGQRNTFFCNECQQ. The active-site Proton donor; for delta-elimination activity is the Arg-259.

Belongs to the FPG family. In terms of assembly, monomer. Zn(2+) is required as a cofactor.

The catalysed reaction is Hydrolysis of DNA containing ring-opened 7-methylguanine residues, releasing 2,6-diamino-4-hydroxy-5-(N-methyl)formamidopyrimidine.. It catalyses the reaction 2'-deoxyribonucleotide-(2'-deoxyribose 5'-phosphate)-2'-deoxyribonucleotide-DNA = a 3'-end 2'-deoxyribonucleotide-(2,3-dehydro-2,3-deoxyribose 5'-phosphate)-DNA + a 5'-end 5'-phospho-2'-deoxyribonucleoside-DNA + H(+). Involved in base excision repair of DNA damaged by oxidation or by mutagenic agents. Acts as a DNA glycosylase that recognizes and removes damaged bases. Has a preference for oxidized purines, such as 7,8-dihydro-8-oxoguanine (8-oxoG). Has AP (apurinic/apyrimidinic) lyase activity and introduces nicks in the DNA strand. Cleaves the DNA backbone by beta-delta elimination to generate a single-strand break at the site of the removed base with both 3'- and 5'-phosphates. The protein is Formamidopyrimidine-DNA glycosylase of Vibrio parahaemolyticus serotype O3:K6 (strain RIMD 2210633).